We begin with the raw amino-acid sequence, 147 residues long: MGTPASVVSEPPPWQAPTEARGRKQASANIFQDAELLQIQGLFQRSGDQLAEERAQIIWECAGDHHVAEALKRLRRKRPPRQKPLGHSLHHCSRLRILEPHSPLADPQSATETASTEQYLHSRRKSARIRRNWKKPGPTSYLHQIRH.

2 disordered regions span residues 1–27 and 99–147; these read MGTP…KQAS and EPHS…QIRH. Over residues 108–119 the composition is skewed to polar residues; it reads QSATETASTEQY. Residues 121 to 134 are compositionally biased toward basic residues; that stretch reads HSRRKSARIRRNWK.

May be involved in MAP kinase activation, epithelial sodium channel (ENaC) down-regulation and cell cycling. The chain is Arginine vasopressin-induced protein 1 (AVPI1) from Pongo abelii (Sumatran orangutan).